The primary structure comprises 93 residues: DNA-binding protein Fis (93 aa).

The segment at residues 74–93 (QTRAAQMMGINRGTLRKKLK) is a DNA-binding region (H-T-H motif).

This sequence belongs to the transcriptional regulatory Fis family. In terms of assembly, homodimer.

Activates ribosomal RNA transcription. Plays a direct role in upstream activation of rRNA promoters. The protein is DNA-binding protein Fis of Proteus vulgaris.